The chain runs to 213 residues: Penicillin-binding protein activator LpoB (213 aa).

A signal peptide spans Met-1 to Gly-19. Residue Cys-20 is the site of N-palmitoyl cysteine attachment. Cys-20 carries S-diacylglycerol cysteine lipidation. Positions Pro-28–His-74 are disordered. The segment covering Pro-36–Pro-50 has biased composition (pro residues).

This sequence belongs to the LpoB family. In terms of assembly, interacts with PBP1b.

It localises to the cell outer membrane. Its function is as follows. Regulator of peptidoglycan synthesis that is essential for the function of penicillin-binding protein 1B (PBP1b). This Escherichia coli O157:H7 protein is Penicillin-binding protein activator LpoB.